The chain runs to 622 residues: DNA-directed RNA polymerase subunit gamma (622 aa).

Cysteine 70, cysteine 72, cysteine 85, and cysteine 88 together coordinate Zn(2+). Residues aspartate 466, aspartate 468, and aspartate 470 each coordinate Mg(2+).

The protein belongs to the RNA polymerase beta' chain family. RpoC1 subfamily. In terms of assembly, in cyanobacteria the RNAP catalytic core is composed of 2 alpha, 1 beta, 1 beta', 1 gamma and 1 omega subunit. When a sigma factor is associated with the core the holoenzyme is formed, which can initiate transcription. It depends on Mg(2+) as a cofactor. Requires Zn(2+) as cofactor.

It carries out the reaction RNA(n) + a ribonucleoside 5'-triphosphate = RNA(n+1) + diphosphate. Its function is as follows. DNA-dependent RNA polymerase catalyzes the transcription of DNA into RNA using the four ribonucleoside triphosphates as substrates. This chain is DNA-directed RNA polymerase subunit gamma, found in Thermosynechococcus vestitus (strain NIES-2133 / IAM M-273 / BP-1).